Consider the following 464-residue polypeptide: Argininosuccinate lyase (464 aa).

This sequence belongs to the lyase 1 family. Argininosuccinate lyase subfamily.

It is found in the cytoplasm. It carries out the reaction 2-(N(omega)-L-arginino)succinate = fumarate + L-arginine. It functions in the pathway amino-acid biosynthesis; L-arginine biosynthesis; L-arginine from L-ornithine and carbamoyl phosphate: step 3/3. This chain is Argininosuccinate lyase, found in Frankia casuarinae (strain DSM 45818 / CECT 9043 / HFP020203 / CcI3).